A 466-amino-acid polypeptide reads, in one-letter code: Arginine biosynthesis bifunctional protein ArgJ, mitochondrial (466 aa).

Positions 194, 223, 234, 321, 461, and 466 each coordinate substrate. Catalysis depends on Thr-234, which acts as the Nucleophile.

The protein belongs to the ArgJ family. As to quaternary structure, heterodimer of an alpha and a beta chain. Post-translationally, the alpha and beta chains are autoproteolytically processed from a single precursor protein within the mitochondrion.

It is found in the mitochondrion matrix. It catalyses the reaction N(2)-acetyl-L-ornithine + L-glutamate = N-acetyl-L-glutamate + L-ornithine. It carries out the reaction L-glutamate + acetyl-CoA = N-acetyl-L-glutamate + CoA + H(+). It functions in the pathway amino-acid biosynthesis; L-arginine biosynthesis; L-ornithine and N-acetyl-L-glutamate from L-glutamate and N(2)-acetyl-L-ornithine (cyclic): step 1/1. It participates in amino-acid biosynthesis; L-arginine biosynthesis; N(2)-acetyl-L-ornithine from L-glutamate: step 1/4. Catalyzes two activities which are involved in the cyclic version of arginine biosynthesis: the synthesis of acetylglutamate from glutamate and acetyl-CoA, and of ornithine by transacetylation between acetylornithine and glutamate. This is Arginine biosynthesis bifunctional protein ArgJ, mitochondrial from Aspergillus fumigatus (strain ATCC MYA-4609 / CBS 101355 / FGSC A1100 / Af293) (Neosartorya fumigata).